The chain runs to 474 residues: Lipoprotein lipase (474 aa).

The N-terminal stretch at 1–27 (MESKALLLVALGVWLQSLTAFRGGVAA) is a signal peptide. The tract at residues 32–53 (RDFSDIESKFALRTPEDTAEDT) is interaction with GPIHBP1. Residues Cys-54 and Cys-67 are joined by a disulfide bond. Asn-70 is a glycosylation site (N-linked (GlcNAc...) asparagine). Tyr-121 is modified (3'-nitrotyrosine). The Nucleophile role is filled by Ser-159. Asp-183 (charge relay system) is an active-site residue. 3'-nitrotyrosine is present on Tyr-191. Residues Ala-194, Arg-197, Ser-199, and Asp-202 each coordinate Ca(2+). Cys-243 and Cys-266 are oxidised to a cystine. The interval 243 to 266 (CNIGEAIRVIAEKGLGDVDQLVKC) is essential for determining substrate specificity. His-268 acts as the Charge relay system in catalysis. Disulfide bonds link Cys-291–Cys-310 and Cys-302–Cys-305. Residues 341 to 464 (FHYQVKIHFS…KGKDAAVFVK (124 aa)) form the PLAT domain. At Tyr-343 the chain carries 3'-nitrotyrosine. N-linked (GlcNAc...) asparagine glycosylation occurs at Asn-386. Positions 417–421 (WSDWW) are important for interaction with lipoprotein particles. Residues 430–434 (KIRVK) are important for heparin binding. Positions 443 to 467 (IFCAREKVSHLQKGKDAAVFVKCHD) are interaction with GPIHBP1. A disulfide bridge connects residues Cys-445 and Cys-465.

It belongs to the AB hydrolase superfamily. Lipase family. Homodimer. Interacts with GPIHBP1 with 1:1 stoichiometry. Interacts with APOC2; the interaction activates LPL activity in the presence of lipids. Interaction with heparan sulfate proteoglycans is required to protect LPL against loss of activity. Associates with lipoprotein particles in blood plasma. Interacts with LMF1 and SEL1L; interaction with SEL1L is required to prevent aggregation of newly synthesized LPL in the endoplasmic reticulum (ER), and for normal export of LPL from the ER to the extracellular space. Interacts with SORL1; SORL1 acts as a sorting receptor, promoting LPL localization to endosomes and later to lysosomes, leading to degradation of newly synthesized LPL. In terms of processing, tyrosine nitration after lipopolysaccharide (LPS) challenge down-regulates the lipase activity.

The protein resides in the cell membrane. It localises to the secreted. It is found in the extracellular space. The protein localises to the extracellular matrix. It catalyses the reaction a triacylglycerol + H2O = a diacylglycerol + a fatty acid + H(+). The catalysed reaction is a 1,2-diacyl-sn-glycero-3-phosphocholine + H2O = a 2-acyl-sn-glycero-3-phosphocholine + a fatty acid + H(+). It carries out the reaction 1,2,3-tri-(9Z-octadecenoyl)-glycerol + H2O = di-(9Z)-octadecenoylglycerol + (9Z)-octadecenoate + H(+). The enzyme catalyses 1,2-di-(9Z-octadecenoyl)-sn-glycero-3-phosphocholine + H2O = (9Z-octadecenoyl)-sn-glycero-3-phosphocholine + (9Z)-octadecenoate + H(+). It catalyses the reaction 1,2,3-tributanoylglycerol + H2O = dibutanoylglycerol + butanoate + H(+). The catalysed reaction is 1,2-dihexadecanoyl-sn-glycero-3-phosphocholine + H2O = hexadecanoyl-sn-glycero-3-phosphocholine + hexadecanoate + H(+). Its activity is regulated as follows. The apolipoprotein APOC2 acts as a coactivator of LPL activity. Ca(2+) binding promotes protein stability and formation of the active homodimer. Interaction with GPIHBP1 protects LPL against inactivation by ANGPTL4. Key enzyme in triglyceride metabolism. Catalyzes the hydrolysis of triglycerides from circulating chylomicrons and very low density lipoproteins (VLDL), and thereby plays an important role in lipid clearance from the blood stream, lipid utilization and storage. Although it has both phospholipase and triglyceride lipase activities it is primarily a triglyceride lipase with low but detectable phospholipase activity. Mediates margination of triglyceride-rich lipoprotein particles in capillaries. Recruited to its site of action on the luminal surface of vascular endothelium by binding to GPIHBP1 and cell surface heparan sulfate proteoglycans. The polypeptide is Lipoprotein lipase (Lpl) (Rattus norvegicus (Rat)).